The sequence spans 586 residues: 25S rRNA (adenine-N(1))-methyltransferase (586 aa).

Disordered stretches follow at residues 23 to 229 (GTAP…LTPL) and 536 to 573 (GKCV…EVKD). Positions 25 to 41 (APAAPAPASAPAVSSSK) are enriched in low complexity. Positions 65 to 83 (LWEKVIEQKKEGVADGVKK) are enriched in basic and acidic residues. Residues 99–108 (KLSNSNNDGN) are compositionally biased toward polar residues. The span at 114-123 (NNKKKNKNKN) shows a compositional bias: basic residues. A compositionally biased stretch (acidic residues) spans 144–163 (GEEDEDDNNDDADEWEGIDE). The span at 164-182 (DEKHASSEKPTPKKDDKKQ) shows a compositional bias: basic and acidic residues. Residues 183–192 (QQLQQQQQQK) show a composition bias toward low complexity. Residues 204 to 213 (NGTTSNWQQD) are compositionally biased toward polar residues. Low complexity predominate over residues 217 to 229 (PKTATPAPKLTPL). A compositionally biased stretch (basic and acidic residues) spans 539–549 (VPKDGQEDTTK). The segment covering 550–559 (NKKGGQKPKP) has biased composition (basic residues).

Belongs to the methyltransferase superfamily. RRP8 family.

The protein localises to the nucleus. It is found in the nucleolus. S-adenosyl-L-methionine-dependent methyltransferase that specifically methylates the N(1) position of a conserved adenine in helix 25.1 in 25S rRNA. Required both for ribosomal 40S and 60S subunits biogenesis. Required for efficient pre-rRNA cleavage at site A2. This is 25S rRNA (adenine-N(1))-methyltransferase (RPR8) from Chaetomium thermophilum (strain DSM 1495 / CBS 144.50 / IMI 039719) (Thermochaetoides thermophila).